Here is a 150-residue protein sequence, read N- to C-terminus: MKKLLSLVIIVVGIIADQVFKNWVVANIQLGDTKKIWPDVLSLTYIKNDGAAWSSFSGQQWFFLVLTPIVLIVALWFLWKKMGQNWYFAGLTLIIAGALGNFMDRVRQGFVVDMFQTEFMNFPIFNIADILLSVGFVVLFIAILTDKETK.

3 consecutive transmembrane segments (helical) span residues 5–25 (LSLV…NWVV), 59–79 (QQWF…WFLW), and 82–102 (MGQN…LGNF). Catalysis depends on residues D113 and D129. A helical transmembrane segment spans residues 124-144 (IFNIADILLSVGFVVLFIAIL).

The protein belongs to the peptidase A8 family.

Its subcellular location is the cell membrane. The catalysed reaction is Release of signal peptides from bacterial membrane prolipoproteins. Hydrolyzes -Xaa-Yaa-Zaa-|-(S,diacylglyceryl)Cys-, in which Xaa is hydrophobic (preferably Leu), and Yaa (Ala or Ser) and Zaa (Gly or Ala) have small, neutral side chains.. It participates in protein modification; lipoprotein biosynthesis (signal peptide cleavage). Functionally, this protein specifically catalyzes the removal of signal peptides from prolipoproteins. This is Lipoprotein signal peptidase from Lactococcus lactis subsp. cremoris (strain SK11).